Reading from the N-terminus, the 523-residue chain is Succinate-semialdehyde dehydrogenase, mitochondrial (523 aa).

Residues 1–35 constitute a mitochondrion transit peptide; it reads MATCFLLRSFWAARPALPPPGRFRPEPAGTPRRSY. Lys74 is subject to N6-acetyllysine. N6-acetyllysine; alternate is present on Lys114. N6-succinyllysine; alternate is present on Lys114. Lys123 is modified (N6-succinyllysine). Lys128 carries the N6-acetyllysine modification. At Lys172 the chain carries N6-succinyllysine. NAD(+) contacts are provided by residues Arg201 and 216 to 219; that span reads KPAE. Arg201 provides a ligand contact to substrate. Residue Lys253 is modified to N6-acetyllysine; alternate. An N6-succinyllysine; alternate modification is found at Lys253. 272-277 lines the NAD(+) pocket; sequence GSTATG. Catalysis depends on Glu294, which acts as the Proton acceptor. Arg322 contributes to the substrate binding site. Residue Cys328 is the Nucleophile of the active site. Cysteines 328 and 330 form a disulfide. Lys347 is modified (N6-acetyllysine; alternate). An N6-succinyllysine; alternate modification is found at Lys347. An N6-acetyllysine modification is found at Lys353. Lys390 carries the N6-succinyllysine modification. Lys399 is modified (N6-acetyllysine). The residue at position 403 (Ser403) is a Phosphoserine. Ser486 is a substrate binding site. Ser487 carries the phosphoserine modification.

This sequence belongs to the aldehyde dehydrogenase family. Homotetramer.

It localises to the mitochondrion. It catalyses the reaction succinate semialdehyde + NAD(+) + H2O = succinate + NADH + 2 H(+). The protein operates within amino-acid degradation; 4-aminobutanoate degradation. Its activity is regulated as follows. Redox-regulated. Inhibited under oxydizing conditions. In terms of biological role, catalyzes one step in the degradation of the inhibitory neurotransmitter gamma-aminobutyric acid (GABA). The protein is Succinate-semialdehyde dehydrogenase, mitochondrial (Aldh5a1) of Mus musculus (Mouse).